A 529-amino-acid polypeptide reads, in one-letter code: Bifunctional purine biosynthesis protein PurH (529 aa).

Residues 2–148 (QQLRPIHRAL…KNHKDVAIVV (147 aa)) form the MGS-like domain.

Belongs to the PurH family.

The catalysed reaction is (6R)-10-formyltetrahydrofolate + 5-amino-1-(5-phospho-beta-D-ribosyl)imidazole-4-carboxamide = 5-formamido-1-(5-phospho-D-ribosyl)imidazole-4-carboxamide + (6S)-5,6,7,8-tetrahydrofolate. The enzyme catalyses IMP + H2O = 5-formamido-1-(5-phospho-D-ribosyl)imidazole-4-carboxamide. The protein operates within purine metabolism; IMP biosynthesis via de novo pathway; 5-formamido-1-(5-phospho-D-ribosyl)imidazole-4-carboxamide from 5-amino-1-(5-phospho-D-ribosyl)imidazole-4-carboxamide (10-formyl THF route): step 1/1. Its pathway is purine metabolism; IMP biosynthesis via de novo pathway; IMP from 5-formamido-1-(5-phospho-D-ribosyl)imidazole-4-carboxamide: step 1/1. The chain is Bifunctional purine biosynthesis protein PurH from Photorhabdus laumondii subsp. laumondii (strain DSM 15139 / CIP 105565 / TT01) (Photorhabdus luminescens subsp. laumondii).